A 298-amino-acid polypeptide reads, in one-letter code: Sulfate adenylyltransferase subunit 2 (298 aa).

Basic and acidic residues-rich tracts occupy residues 272–282 and 289–298; these read RTSERQGRLID and MEKKKQEGYF. The interval 272–298 is disordered; that stretch reads RTSERQGRLIDSDSAGSMEKKKQEGYF.

This sequence belongs to the PAPS reductase family. CysD subfamily. In terms of assembly, heterodimer composed of CysD, the smaller subunit, and CysN.

It catalyses the reaction sulfate + ATP + H(+) = adenosine 5'-phosphosulfate + diphosphate. The protein operates within sulfur metabolism; hydrogen sulfide biosynthesis; sulfite from sulfate: step 1/3. With CysN forms the ATP sulfurylase (ATPS) that catalyzes the adenylation of sulfate producing adenosine 5'-phosphosulfate (APS) and diphosphate, the first enzymatic step in sulfur assimilation pathway. APS synthesis involves the formation of a high-energy phosphoric-sulfuric acid anhydride bond driven by GTP hydrolysis by CysN coupled to ATP hydrolysis by CysD. The protein is Sulfate adenylyltransferase subunit 2 of Burkholderia lata (strain ATCC 17760 / DSM 23089 / LMG 22485 / NCIMB 9086 / R18194 / 383).